The chain runs to 147 residues: UPF0735 ACT domain-containing protein YszB (147 aa).

The ACT domain maps to 70–145 (TLFFHLEDRS…FVEKVEILGS (76 aa)).

This sequence belongs to the UPF0735 family.

The sequence is that of UPF0735 ACT domain-containing protein YszB (yszB) from Bacillus subtilis (strain 168).